The following is a 179-amino-acid chain: ATP synthase subunit delta (179 aa).

It belongs to the ATPase delta chain family. F-type ATPases have 2 components, F(1) - the catalytic core - and F(0) - the membrane proton channel. F(1) has five subunits: alpha(3), beta(3), gamma(1), delta(1), epsilon(1). F(0) has three main subunits: a(1), b(2) and c(10-14). The alpha and beta chains form an alternating ring which encloses part of the gamma chain. F(1) is attached to F(0) by a central stalk formed by the gamma and epsilon chains, while a peripheral stalk is formed by the delta and b chains.

Its subcellular location is the cell inner membrane. Functionally, f(1)F(0) ATP synthase produces ATP from ADP in the presence of a proton or sodium gradient. F-type ATPases consist of two structural domains, F(1) containing the extramembraneous catalytic core and F(0) containing the membrane proton channel, linked together by a central stalk and a peripheral stalk. During catalysis, ATP synthesis in the catalytic domain of F(1) is coupled via a rotary mechanism of the central stalk subunits to proton translocation. Its function is as follows. This protein is part of the stalk that links CF(0) to CF(1). It either transmits conformational changes from CF(0) to CF(1) or is implicated in proton conduction. The polypeptide is ATP synthase subunit delta (Burkholderia pseudomallei (strain 1710b)).